A 444-amino-acid chain; its full sequence is Elongation factor 1-alpha (444 aa).

Residues 15–236 (KPHLNLAVIG…ALDTFQPPPR (222 aa)) enclose the tr-type G domain. A G1 region spans residues 24–31 (GHVDNGKS). Residue 24–31 (GHVDNGKS) coordinates GTP. Residue serine 31 coordinates Mg(2+). The G2 stretch occupies residues 80–84 (GVTIE). The segment at 101 to 104 (DLPG) is G3. GTP-binding positions include 101 to 105 (DLPGH) and 163 to 166 (NKMD). The segment at 163-166 (NKMD) is G4. The tract at residues 202–204 (SAI) is G5.

It belongs to the TRAFAC class translation factor GTPase superfamily. Classic translation factor GTPase family. EF-Tu/EF-1A subfamily.

The protein resides in the cytoplasm. The catalysed reaction is GTP + H2O = GDP + phosphate + H(+). GTP hydrolase that promotes the GTP-dependent binding of aminoacyl-tRNA to the A-site of ribosomes during protein biosynthesis. This chain is Elongation factor 1-alpha, found in Pyrobaculum islandicum (strain DSM 4184 / JCM 9189 / GEO3).